Consider the following 497-residue polypeptide: MEKTEEENYSIKELGEKGSDSQEDVAVIFAEKHPIIDKSLNRKLKLKTDLWVMPLLCLISAFQYMDKSTSNYSSIMGIRTDLNMVGNQYNWVGTSFYLGFMVFSLPLSTLLQKFPLSKVTSAFIVAWGILMTLTCLVHSYASYIATRTLLGILESVITPAFVLFIAQWYRKEEQFFRMAFLVAWNGLGGLIGGSMSYGLYKRELENNLTMSPWRILFIITGLITIINGVFIFIHIPDEPSKAWFLSEKEKDLVLKRLDTDHAGLGSKKFKKYQILEACRDVRMYLYFFLQIAVAIPNGGLSNFSSIMLKNLGYVKGKALLMNMPTSSISFAALTLFGLIPEFTNRRMDIALVGLAINLTSGSLIAFAKPTHAQLAGYWLFGISPIPYICILSCISSNSAGHTKKVFMSAVSMIGYCVGNMVGPQTFRSTQAPKYQGAKVSFVVCYCVAIFIIIAIYAVNVRENRRRDEKNEYLSNELSEEDKKDLTDFENPEFRYSI.

The next 11 helical transmembrane spans lie at 91 to 111 (WVGTSFYLGFMVFSLPLSTLL), 119 to 139 (VTSAFIVAWGILMTLTCLVHS), 149 to 169 (LLGILESVITPAFVLFIAQWY), 179 to 199 (AFLVAWNGLGGLIGGSMSYGL), 215 to 235 (ILFIITGLITIINGVFIFIHI), 283 to 303 (MYLYFFLQIAVAIPNGGLSNF), 319 to 339 (LLMNMPTSSISFAALTLFGLI), 347 to 367 (MDIALVGLAINLTSGSLIAFA), 374 to 394 (LAGYWLFGISPIPYICILSCI), 406 to 426 (FMSAVSMIGYCVGNMVGPQTF), and 439 to 459 (VSFVVCYCVAIFIIIAIYAVN).

The protein belongs to the major facilitator superfamily. Allantoate permease family.

The protein resides in the golgi apparatus. Its subcellular location is the membrane. This is an uncharacterized protein from Schizosaccharomyces pombe (strain 972 / ATCC 24843) (Fission yeast).